We begin with the raw amino-acid sequence, 1494 residues long: DNA-directed RNA polymerase subunit beta' (1494 aa).

4 residues coordinate Zn(2+): cysteine 67, cysteine 69, cysteine 82, and cysteine 85. The Mg(2+) site is built by aspartate 499, aspartate 501, and aspartate 503. Zn(2+)-binding residues include cysteine 868, cysteine 944, cysteine 951, and cysteine 954.

Belongs to the RNA polymerase beta' chain family. In terms of assembly, the RNAP catalytic core consists of 2 alpha, 1 beta, 1 beta' and 1 omega subunit. When a sigma factor is associated with the core the holoenzyme is formed, which can initiate transcription. Requires Mg(2+) as cofactor. Zn(2+) serves as cofactor.

The catalysed reaction is RNA(n) + a ribonucleoside 5'-triphosphate = RNA(n+1) + diphosphate. Functionally, DNA-dependent RNA polymerase catalyzes the transcription of DNA into RNA using the four ribonucleoside triphosphates as substrates. The chain is DNA-directed RNA polymerase subunit beta' from Chlorobaculum parvum (strain DSM 263 / NCIMB 8327) (Chlorobium vibrioforme subsp. thiosulfatophilum).